The primary structure comprises 95 residues: Translation initiation factor 1A (95 aa).

The S1-like domain maps to 6 to 80; the sequence is SRKNLRMPEE…EKADITWRYE (75 aa).

Belongs to the eIF-1A family.

Its function is as follows. Seems to be required for maximal rate of protein biosynthesis. Enhances ribosome dissociation into subunits and stabilizes the binding of the initiator Met-tRNA(I) to 40 S ribosomal subunits. This chain is Translation initiation factor 1A, found in Haloarcula marismortui (strain ATCC 43049 / DSM 3752 / JCM 8966 / VKM B-1809) (Halobacterium marismortui).